A 71-amino-acid chain; its full sequence is Phosphatidylinositol N-acetylglucosaminyltransferase subunit Y (71 aa).

Over 1 to 3 the chain is Cytoplasmic; sequence MFL. A helical membrane pass occupies residues 4–26; the sequence is SLPMLTVLIPLVSLAGLFYSASV. Over 27–44 the chain is Lumenal; it reads EDDFPQGCTSTTSLCFYS. Residues 45 to 65 form a helical membrane-spanning segment; sequence LLLPITIPVYVFFHLWTWMGI. Residues 66–71 lie on the Cytoplasmic side of the membrane; sequence KLFRHN.

Component of the glycosylphosphatidylinositol-N-acetylglucosaminyltransferase (GPI-GnT) complex composed at least by PIGA, PIGC, PIGH, PIGP, PIGQ, PIGY and DPM2. Interacts directly with PIGA; this interaction regulates glycosylphosphatidylinositol-N-acetylglucosaminyltransferase activity. Does not interact with Ras proteins.

It is found in the endoplasmic reticulum membrane. It functions in the pathway glycolipid biosynthesis; glycosylphosphatidylinositol-anchor biosynthesis. In terms of biological role, part of the glycosylphosphatidylinositol-N-acetylglucosaminyltransferase (GPI-GnT) complex that catalyzes the transfer of N-acetylglucosamine from UDP-N-acetylglucosamine to phosphatidylinositol and participates in the first step of GPI biosynthesis. May act by regulating the catalytic subunit PIGA. The chain is Phosphatidylinositol N-acetylglucosaminyltransferase subunit Y from Bos taurus (Bovine).